The chain runs to 662 residues: MRLMLLCCTWRDEPMGEEEGTDLPVCASCGQGIFDGQYLQALNADWHADCFRCGECGASLSHQYYEKDGRLYCKKDYWARFGELCHGCAEQITKGLVMVAGEQKYHPECFSCLNCRAFIGDGDTYALVERSKLYCGHCYYQMVVTPVIEQILPDSPGSRIPHTVTLVSIPACSDGKRGFSVSIDPHCGAQGCGAEHSRTVRVREVDPDCISPDVKNSIHVGDRILEINGTPIGHVPLDEIDLLIQETSRLLQLTIEHDPHEPLPRDLALPCSPLPDPHSPLRSPVPAPHGDLGTMRQRAVMRSCSTDKSPGSSSVGSPASQRKDIGRSESLRVVSRAHRIFRPSDLIHGEVLGKGCFGQAIKVTHRETGEVMVMKELIRFDEETQRTFLKEVKVMRCLEHPNVLKFIGVLYKEKRLNFITEYIKGGTLRGLIKSMDSHYPWSQRVSFAKDIAAGMAYLHSMNIIHRDLNSHNCLVRENKSVVVADFGLARLMVDEKNQPEHLQNLKKPDRKKRYTVVGNPYWMAPEMINGRSYDEKVDIFSFGIVLCEIIGRVSADPDYLPRTTDFGLNVRGFLERYCPPACPPSFFPIAACCCDLDPEKRPSFSKLEQWLETLRMHLDIRLPLSSQLEQLTCAFWETHRRGEGGLPPHPELPDTAPHLHPL.

LIM zinc-binding domains lie at 24–83 (PVCA…RFGE) and 84–145 (LCHG…MVVT). Residues 166-259 (LVSIPACSDG…LLQLTIEHDP (94 aa)) enclose the PDZ domain. The tract at residues 262–328 (PLPRDLALPC…ASQRKDIGRS (67 aa)) is disordered. Residues 272-287 (SPLPDPHSPLRSPVPA) show a composition bias toward pro residues. Low complexity predominate over residues 309-320 (SPGSSSVGSPAS). Residues 346 to 611 (LIHGEVLGKG…PSFSKLEQWL (266 aa)) enclose the Protein kinase domain. ATP-binding positions include 352 to 360 (LGKGCFGQA) and K375. D467 is a catalytic residue.

This sequence belongs to the protein kinase superfamily. TKL Ser/Thr protein kinase family. In terms of tissue distribution, expressed predominantly in the brain.

It is found in the cytoplasm. The protein localises to the nucleus. Its subcellular location is the cytoskeleton. It localises to the cell projection. The protein resides in the growth cone. The catalysed reaction is L-seryl-[protein] + ATP = O-phospho-L-seryl-[protein] + ADP + H(+). It catalyses the reaction L-threonyl-[protein] + ATP = O-phospho-L-threonyl-[protein] + ADP + H(+). Its function is as follows. Protein kinase which regulates actin filament dynamics. Phosphorylates and inactivates the actin binding/depolymerizing factor cofilin, thereby stabilizing the actin cytoskeleton. Required for motility of the axon growth cone. This chain is LIM domain kinase 1 (LIMK1), found in Gallus gallus (Chicken).